The chain runs to 185 residues: Protein GrpE (185 aa).

The segment at 1–37 (MSEEKQTPEQEAEVEAQEEAVQADTEEVTQDEQSAFQ) is disordered.

The protein belongs to the GrpE family. Homodimer.

The protein resides in the cytoplasm. In terms of biological role, participates actively in the response to hyperosmotic and heat shock by preventing the aggregation of stress-denatured proteins, in association with DnaK and GrpE. It is the nucleotide exchange factor for DnaK and may function as a thermosensor. Unfolded proteins bind initially to DnaJ; upon interaction with the DnaJ-bound protein, DnaK hydrolyzes its bound ATP, resulting in the formation of a stable complex. GrpE releases ADP from DnaK; ATP binding to DnaK triggers the release of the substrate protein, thus completing the reaction cycle. Several rounds of ATP-dependent interactions between DnaJ, DnaK and GrpE are required for fully efficient folding. This is Protein GrpE from Bacillus pumilus (strain SAFR-032).